Consider the following 440-residue polypeptide: MSEYSQTVPELVSWARKNDFSISLPVERLAFLMAIAVLNSERLDGEMSESELVDAFREVCKGFEQTTESVAVRANNAINDMVRQKLLNRFTSELADNNAIYRLTPLGMGISDYYIRQREFSTLRLSMQLSVVASELHRAAEAAEEGGDEFHWHRNVFAPLKYSVAEIFDSIDMSQRVMDEQQSSVKEDIAALLNQDWQAAIANCEQLLSETSGTLRELQDTLEAAGDKLQANLLRIQEANMDSGGSELVDKLVFDLQSKLDRIISWGQQAIDLWIGYDRHVHKFIRTAIDMDKNRIFSQRLRQSVQHYFDNPWTLTIANAERLLDMRDEELTLRNEEVTGELPLALEYEEFSEINEQLAEMIEKALLIYRQEQRPLDLGAVLRDYLAQHPLSRHFDVARILVDQAVRLGVAEADFSGLPAEWLAINDYGAKVQAHVIDTY.

Residues 208–236 (LSETSGTLRELQDTLEAAGDKLQANLLRI) are leucine-zipper.

Belongs to the MukF family. As to quaternary structure, interacts, and probably forms a ternary complex, with MukE and MukB via its C-terminal region. The complex formation is stimulated by calcium or magnesium. It is required for an interaction between MukE and MukB.

The protein resides in the cytoplasm. Its subcellular location is the nucleoid. Its function is as follows. Involved in chromosome condensation, segregation and cell cycle progression. May participate in facilitating chromosome segregation by condensation DNA from both sides of a centrally located replisome during cell division. Not required for mini-F plasmid partitioning. Probably acts via its interaction with MukB and MukE. Overexpression results in anucleate cells. It has a calcium binding activity. This is Chromosome partition protein MukF from Photorhabdus laumondii subsp. laumondii (strain DSM 15139 / CIP 105565 / TT01) (Photorhabdus luminescens subsp. laumondii).